The chain runs to 122 residues: Small ribosomal subunit protein uS13 (122 aa).

Residues 95 to 122 are disordered; sequence GLPVRGQRTHTNARTRKGPAKSIAGKKK.

It belongs to the universal ribosomal protein uS13 family. In terms of assembly, part of the 30S ribosomal subunit. Forms a loose heterodimer with protein S19. Forms two bridges to the 50S subunit in the 70S ribosome.

In terms of biological role, located at the top of the head of the 30S subunit, it contacts several helices of the 16S rRNA. In the 70S ribosome it contacts the 23S rRNA (bridge B1a) and protein L5 of the 50S subunit (bridge B1b), connecting the 2 subunits; these bridges are implicated in subunit movement. Contacts the tRNAs in the A and P-sites. In Nitrobacter hamburgensis (strain DSM 10229 / NCIMB 13809 / X14), this protein is Small ribosomal subunit protein uS13.